Reading from the N-terminus, the 345-residue chain is Holliday junction branch migration complex subunit RuvB (345 aa).

The tract at residues 1–22 (MIETDALSGGTPRRLVTQQPLS) is disordered. Residues 4–193 (TDALSGGTPR…FGIVARLEFY (190 aa)) form a large ATPase domain (RuvB-L) region. Residues Leu-32, Arg-33, Gly-74, Lys-77, Thr-78, Thr-79, 140–142 (EDY), Arg-183, Tyr-193, and Arg-230 each bind ATP. Thr-78 lines the Mg(2+) pocket. The tract at residues 194–264 (TPEELTRIVR…VADAALSMLD (71 aa)) is small ATPAse domain (RuvB-S). Positions 267 to 345 (PAGLDVMDRK…HFGFVPPERV (79 aa)) are head domain (RuvB-H). Residues Arg-322 and Arg-327 each contribute to the DNA site.

This sequence belongs to the RuvB family. In terms of assembly, homohexamer. Forms an RuvA(8)-RuvB(12)-Holliday junction (HJ) complex. HJ DNA is sandwiched between 2 RuvA tetramers; dsDNA enters through RuvA and exits via RuvB. An RuvB hexamer assembles on each DNA strand where it exits the tetramer. Each RuvB hexamer is contacted by two RuvA subunits (via domain III) on 2 adjacent RuvB subunits; this complex drives branch migration. In the full resolvosome a probable DNA-RuvA(4)-RuvB(12)-RuvC(2) complex forms which resolves the HJ.

It localises to the cytoplasm. It carries out the reaction ATP + H2O = ADP + phosphate + H(+). Its function is as follows. The RuvA-RuvB-RuvC complex processes Holliday junction (HJ) DNA during genetic recombination and DNA repair, while the RuvA-RuvB complex plays an important role in the rescue of blocked DNA replication forks via replication fork reversal (RFR). RuvA specifically binds to HJ cruciform DNA, conferring on it an open structure. The RuvB hexamer acts as an ATP-dependent pump, pulling dsDNA into and through the RuvAB complex. RuvB forms 2 homohexamers on either side of HJ DNA bound by 1 or 2 RuvA tetramers; 4 subunits per hexamer contact DNA at a time. Coordinated motions by a converter formed by DNA-disengaged RuvB subunits stimulates ATP hydrolysis and nucleotide exchange. Immobilization of the converter enables RuvB to convert the ATP-contained energy into a lever motion, pulling 2 nucleotides of DNA out of the RuvA tetramer per ATP hydrolyzed, thus driving DNA branch migration. The RuvB motors rotate together with the DNA substrate, which together with the progressing nucleotide cycle form the mechanistic basis for DNA recombination by continuous HJ branch migration. Branch migration allows RuvC to scan DNA until it finds its consensus sequence, where it cleaves and resolves cruciform DNA. The sequence is that of Holliday junction branch migration complex subunit RuvB from Laribacter hongkongensis (strain HLHK9).